We begin with the raw amino-acid sequence, 245 residues long: 4-hydroxy-tetrahydrodipicolinate reductase (245 aa).

NAD(+) is bound by residues 8-13, 78-80, and 102-105; these read GSTGKM, GTT, and SANM. His-134 serves as the catalytic Proton donor/acceptor. His-135 is a (S)-2,3,4,5-tetrahydrodipicolinate binding site. The active-site Proton donor is the Lys-138. 144 to 145 is a (S)-2,3,4,5-tetrahydrodipicolinate binding site; the sequence is GT.

The protein belongs to the DapB family.

It is found in the cytoplasm. It catalyses the reaction (S)-2,3,4,5-tetrahydrodipicolinate + NAD(+) + H2O = (2S,4S)-4-hydroxy-2,3,4,5-tetrahydrodipicolinate + NADH + H(+). It carries out the reaction (S)-2,3,4,5-tetrahydrodipicolinate + NADP(+) + H2O = (2S,4S)-4-hydroxy-2,3,4,5-tetrahydrodipicolinate + NADPH + H(+). It functions in the pathway amino-acid biosynthesis; L-lysine biosynthesis via DAP pathway; (S)-tetrahydrodipicolinate from L-aspartate: step 4/4. Functionally, catalyzes the conversion of 4-hydroxy-tetrahydrodipicolinate (HTPA) to tetrahydrodipicolinate. The protein is 4-hydroxy-tetrahydrodipicolinate reductase of Rickettsia akari (strain Hartford).